Consider the following 775-residue polypeptide: Armadillo-like helical domain-containing protein 4 (775 aa).

The signal sequence occupies residues 1-47 (MLQDSITGIVNSFNLFFPSTMSRPTLMPTCVAFCSILFLTLATGCQA). The Extracellular portion of the chain corresponds to 48-715 (FPKVERRETA…KDKAGYMSGM (668 aa)). The N-linked (GlcNAc...) asparagine glycan is linked to Asn76. 3 disordered regions span residues 120–148 (AGLL…PGPS), 247–273 (VPGV…DGQS), and 324–366 (KFES…PSST). Over residues 129-142 (GVYSSSEPVVSASE) the composition is skewed to polar residues. A compositionally biased stretch (basic and acidic residues) spans 324 to 335 (KFESISRGRPPE). The N-linked (GlcNAc...) asparagine glycan is linked to Asn476. The segment at 559 to 669 (IPVLGSPMAP…PGITSQEPDI (111 aa)) is disordered. Positions 577–599 (TISSALPSEGRTSPSISRPNTAA) are enriched in polar residues. Positions 606 to 640 (LESEEVEDDEDEEDEEDEEEEEEDEEDEEDEEDKE) are enriched in acidic residues. Residues 716-736 (LVPVGVGIAGALFILGALYSI) form a helical membrane-spanning segment. The Cytoplasmic segment spans residues 737 to 775 (KVMNRRRRNGFKRHKRKQREFNSMQDRVMLLADSSEDEF). Ser770 and Ser771 each carry phosphoserine.

Interacts with IL6ST; this interaction prevents IL6ST protein homodimerization and bridges ARMH4 with IL6R and STAT3 and therefore inhibits phosphorylation of STAT3 at 'Tyr-705'. Interacts (via cytoplasmic tail) with RICTOR; this interaction bridges ARMH4 to the mTORC2 complex and inhibits the mTORC2 kinase activity. Expressed in bone-marroew cells.

The protein resides in the membrane. May modulate immune response and may play a role in inflammation. Down-modulates STAT3 signaling throught direct interaction with IL6ST, resulting in the inhibition of phosphorylation of STAT3 at 'Tyr-705'. May negatively regulates AKT signaling by modulating the activity of mTORC2 complex through RICTOR interaction. This Mus musculus (Mouse) protein is Armadillo-like helical domain-containing protein 4.